Reading from the N-terminus, the 160-residue chain is Cytochrome b6-f complex subunit 4 (160 aa).

3 helical membrane passes run 36–56, 95–115, and 128–148; these read LLYIFPVVILGTIACVVGLAV, LLGIALQTLIPLGLMILPFIE, and IAMSLFLFGTFLTIYLGIGAC.

Belongs to the cytochrome b family. PetD subfamily. As to quaternary structure, the 4 large subunits of the cytochrome b6-f complex are cytochrome b6, subunit IV (17 kDa polypeptide, PetD), cytochrome f and the Rieske protein, while the 4 small subunits are PetG, PetL, PetM and PetN. The complex functions as a dimer.

It localises to the cellular thylakoid membrane. Its function is as follows. Component of the cytochrome b6-f complex, which mediates electron transfer between photosystem II (PSII) and photosystem I (PSI), cyclic electron flow around PSI, and state transitions. The protein is Cytochrome b6-f complex subunit 4 of Prochlorococcus marinus (strain MIT 9312).